Here is a 368-residue protein sequence, read N- to C-terminus: Phosphate acyltransferase (368 aa).

It belongs to the PlsX family. Homodimer. Probably interacts with PlsY.

The protein resides in the cytoplasm. The enzyme catalyses a fatty acyl-[ACP] + phosphate = an acyl phosphate + holo-[ACP]. Its pathway is lipid metabolism; phospholipid metabolism. Catalyzes the reversible formation of acyl-phosphate (acyl-PO(4)) from acyl-[acyl-carrier-protein] (acyl-ACP). This enzyme utilizes acyl-ACP as fatty acyl donor, but not acyl-CoA. This chain is Phosphate acyltransferase, found in Granulibacter bethesdensis (strain ATCC BAA-1260 / CGDNIH1).